Here is a 264-residue protein sequence, read N- to C-terminus: Hydroxyethylthiazole kinase (264 aa).

Position 41 (M41) interacts with substrate. ATP is bound by residues K117 and S163. G190 lines the substrate pocket.

The protein belongs to the Thz kinase family. Mg(2+) serves as cofactor.

The enzyme catalyses 5-(2-hydroxyethyl)-4-methylthiazole + ATP = 4-methyl-5-(2-phosphooxyethyl)-thiazole + ADP + H(+). It participates in cofactor biosynthesis; thiamine diphosphate biosynthesis; 4-methyl-5-(2-phosphoethyl)-thiazole from 5-(2-hydroxyethyl)-4-methylthiazole: step 1/1. Catalyzes the phosphorylation of the hydroxyl group of 4-methyl-5-beta-hydroxyethylthiazole (THZ). The polypeptide is Hydroxyethylthiazole kinase (Thermoanaerobacter pseudethanolicus (strain ATCC 33223 / 39E) (Clostridium thermohydrosulfuricum)).